We begin with the raw amino-acid sequence, 122 residues long: Large ribosomal subunit protein uL14 (122 aa).

The protein belongs to the universal ribosomal protein uL14 family. As to quaternary structure, part of the 50S ribosomal subunit. Forms a cluster with proteins L3 and L19. In the 70S ribosome, L14 and L19 interact and together make contacts with the 16S rRNA in bridges B5 and B8.

Its function is as follows. Binds to 23S rRNA. Forms part of two intersubunit bridges in the 70S ribosome. The polypeptide is Large ribosomal subunit protein uL14 (Sulfurovum sp. (strain NBC37-1)).